Consider the following 257-residue polypeptide: NAD kinase (257 aa).

Asp46 serves as the catalytic Proton acceptor. NAD(+) contacts are provided by residues 46 to 47 (DG), His51, 116 to 117 (NE), Asp146, Ala154, 157 to 162 (TAYNLS), and Gln218.

It belongs to the NAD kinase family. A divalent metal cation serves as cofactor.

The protein resides in the cytoplasm. The catalysed reaction is NAD(+) + ATP = ADP + NADP(+) + H(+). In terms of biological role, involved in the regulation of the intracellular balance of NAD and NADP, and is a key enzyme in the biosynthesis of NADP. Catalyzes specifically the phosphorylation on 2'-hydroxyl of the adenosine moiety of NAD to yield NADP. The chain is NAD kinase from Rhizobium meliloti (strain 1021) (Ensifer meliloti).